The chain runs to 74 residues: Complement C5a anaphylatoxin (74 aa).

The involved in C5AR1 binding stretch occupies residues 15 to 44 (YAMLKKCCYDGAYRNDDETCEERAARIKIG). 3 disulfide bridges follow: Cys21–Cys47, Cys22–Cys54, and Cys34–Cys55. Residues 21–55 (CCYDGAYRNDDETCEERAARIKIGPKCVKAFKDCC) form the Anaphylatoxin-like domain. The segment at 72-74 (LGR) is required for 90% of C5a activity; although Arg-74 is not essential.

It is found in the secreted. Its function is as follows. Mediator of local inflammatory process released following cleavage by C5 convertase. Acts by binding to its receptor (C5AR1 or C5AR2), activating G protein-coupled receptor signaling and inducing a variety of responses including intracellular calcium release, contraction of smooth muscle, increased vascular permeability, and histamine release from mast cells and basophilic leukocytes. C5a is also a potent chemokine which stimulates the locomotion of polymorphonuclear leukocytes and directs their migration toward sites of inflammation. In Sus scrofa (Pig), this protein is Complement C5a anaphylatoxin (C5).